The primary structure comprises 319 residues: Acetyl-coenzyme A carboxylase carboxyl transferase subunit alpha (319 aa).

The CoA carboxyltransferase C-terminal domain occupies 39–293; sequence RLQKKSNDLT…KAVLEKQLHE (255 aa).

It belongs to the AccA family. As to quaternary structure, acetyl-CoA carboxylase is a heterohexamer composed of biotin carboxyl carrier protein (AccB), biotin carboxylase (AccC) and two subunits each of ACCase subunit alpha (AccA) and ACCase subunit beta (AccD).

The protein resides in the cytoplasm. The catalysed reaction is N(6)-carboxybiotinyl-L-lysyl-[protein] + acetyl-CoA = N(6)-biotinyl-L-lysyl-[protein] + malonyl-CoA. It participates in lipid metabolism; malonyl-CoA biosynthesis; malonyl-CoA from acetyl-CoA: step 1/1. In terms of biological role, component of the acetyl coenzyme A carboxylase (ACC) complex. First, biotin carboxylase catalyzes the carboxylation of biotin on its carrier protein (BCCP) and then the CO(2) group is transferred by the carboxyltransferase to acetyl-CoA to form malonyl-CoA. The chain is Acetyl-coenzyme A carboxylase carboxyl transferase subunit alpha from Neisseria meningitidis serogroup C / serotype 2a (strain ATCC 700532 / DSM 15464 / FAM18).